The following is a 138-amino-acid chain: Protein NrdI (138 aa).

This sequence belongs to the NrdI family.

Probably involved in ribonucleotide reductase function. The chain is Protein NrdI from Paracoccus denitrificans (strain Pd 1222).